The sequence spans 106 residues: Large ribosomal subunit protein eL42 (106 aa).

Over residues 1-29 (MVNIPKTRRTYCKGKACRKHTPHKVTQYK) the composition is skewed to basic residues. Positions 1-56 (MVNIPKTRRTYCKGKACRKHTPHKVTQYKKGKDSLSAQGKRRYDRKQSGYGGQTKP) are disordered.

Belongs to the eukaryotic ribosomal protein eL42 family.

This is Large ribosomal subunit protein eL42 (RPL44) from Cryptococcus neoformans var. neoformans serotype D (strain B-3501A) (Filobasidiella neoformans).